Reading from the N-terminus, the 117-residue chain is MLSLTYIVGIASALVIILLLVGLHLPSVMPDNEKLSAYECGFDPMGNARLPFSLRFFLVAILFLLFDLEIALILPYPLGVVFSENTFYNYWLVMLLVVVLTFGLMYEWLKGGLEWTE.

Transmembrane regions (helical) follow at residues 1–21 (MLSL…LLLV), 56–76 (FFLV…ILPY), and 86–106 (TFYN…GLMY).

This sequence belongs to the complex I subunit 3 family.

Its subcellular location is the mitochondrion membrane. The enzyme catalyses a ubiquinone + NADH + 5 H(+)(in) = a ubiquinol + NAD(+) + 4 H(+)(out). Core subunit of the mitochondrial membrane respiratory chain NADH dehydrogenase (Complex I) that is believed to belong to the minimal assembly required for catalysis. Complex I functions in the transfer of electrons from NADH to the respiratory chain. The immediate electron acceptor for the enzyme is believed to be ubiquinone. This Branchiostoma lanceolatum (Common lancelet) protein is NADH-ubiquinone oxidoreductase chain 3 (ND3).